Here is a 344-residue protein sequence, read N- to C-terminus: Golgi-associated RAB2 interactor protein 1B (344 aa).

The protein belongs to the GARIN family.

The protein resides in the golgi apparatus. In terms of biological role, RAB2B effector protein required for accurate acrosome formation and normal male fertility. In complex with RAB2A/RAB2B, seems to suppress excessive vesicle trafficking during acrosome formation. The polypeptide is Golgi-associated RAB2 interactor protein 1B (Garin1b) (Rattus norvegicus (Rat)).